Here is a 116-residue protein sequence, read N- to C-terminus: Protein Wnt-5a (116 aa).

Residue serine 1 is the site of O-palmitoleoyl serine; by PORCN attachment. Residues asparagine 69 and asparagine 83 are each glycosylated (N-linked (GlcNAc...) asparagine). Cysteine 82 and cysteine 97 form a disulfide bridge.

The protein belongs to the Wnt family. Post-translationally, palmitoleoylation is required for efficient binding to frizzled receptors. Depalmitoleoylation leads to Wnt signaling pathway inhibition.

The protein localises to the secreted. It localises to the extracellular space. The protein resides in the extracellular matrix. Its function is as follows. Ligand for members of the frizzled family of seven transmembrane receptors. Can activate or inhibit canonical Wnt signaling, depending on receptor context. Required during embryogenesis for extension of the primary anterior-posterior axis. The protein is Protein Wnt-5a (WNT-5A) of Alopias vulpinus (Common thresher shark).